The chain runs to 242 residues: Pyridoxine 5'-phosphate synthase (242 aa).

Asn-7 contributes to the 3-amino-2-oxopropyl phosphate binding site. 9–10 is a binding site for 1-deoxy-D-xylulose 5-phosphate; sequence DH. Position 18 (Arg-18) interacts with 3-amino-2-oxopropyl phosphate. The active-site Proton acceptor is the His-43. 1-deoxy-D-xylulose 5-phosphate is bound by residues Arg-45 and His-50. The Proton acceptor role is filled by Glu-70. Thr-100 serves as a coordination point for 1-deoxy-D-xylulose 5-phosphate. His-191 acts as the Proton donor in catalysis. 3-amino-2-oxopropyl phosphate is bound by residues Gly-192 and 213–214; that span reads GH.

It belongs to the PNP synthase family. Homooctamer; tetramer of dimers.

The protein resides in the cytoplasm. It carries out the reaction 3-amino-2-oxopropyl phosphate + 1-deoxy-D-xylulose 5-phosphate = pyridoxine 5'-phosphate + phosphate + 2 H2O + H(+). It functions in the pathway cofactor biosynthesis; pyridoxine 5'-phosphate biosynthesis; pyridoxine 5'-phosphate from D-erythrose 4-phosphate: step 5/5. Catalyzes the complicated ring closure reaction between the two acyclic compounds 1-deoxy-D-xylulose-5-phosphate (DXP) and 3-amino-2-oxopropyl phosphate (1-amino-acetone-3-phosphate or AAP) to form pyridoxine 5'-phosphate (PNP) and inorganic phosphate. The chain is Pyridoxine 5'-phosphate synthase from Chromobacterium violaceum (strain ATCC 12472 / DSM 30191 / JCM 1249 / CCUG 213 / NBRC 12614 / NCIMB 9131 / NCTC 9757 / MK).